The primary structure comprises 675 residues: Zeaxanthin epoxidase, chloroplastic (675 aa).

Residues 1–25 (MASTVLYNSLTTSTTVFLRSHLPIS) constitute a chloroplast transit peptide. FAD is bound by residues 92–120 (RILVAGGGIGGLVFALAAKKRGFDVKVFE) and 370–383 (KLTWGQGRVTLLGD). The 65-residue stretch at 558-622 (ICLSRKEDEP…HGTWITDNEG (65 aa)) folds into the FHA domain.

FAD is required as a cofactor.

Its subcellular location is the plastid. It is found in the chloroplast thylakoid membrane. The enzyme catalyses all-trans-zeaxanthin + 4 reduced [2Fe-2S]-[ferredoxin] + 2 O2 + 4 H(+) = all-trans-violaxanthin + 4 oxidized [2Fe-2S]-[ferredoxin] + 2 H2O. Its pathway is plant hormone biosynthesis; abscisate biosynthesis. With respect to regulation, inhibited by diphenyleneiodonium (DPI). Its function is as follows. Converts zeaxanthin into antheraxanthin and subsequently violaxanthin. Involved in the epoxidation of zeaxanthin. The sequence is that of Zeaxanthin epoxidase, chloroplastic from Spinacia oleracea (Spinach).